Consider the following 349-residue polypeptide: D-arabinitol dehydrogenase 1 (349 aa).

Positions 46, 67, 97, 100, 103, 111, and 151 each coordinate Zn(2+).

This sequence belongs to the zinc-containing alcohol dehydrogenase family. Zn(2+) is required as a cofactor.

The protein resides in the cell projection. It catalyses the reaction D-arabinitol + NADP(+) = D-xylulose + NADPH + H(+). The catalysed reaction is D-arabinitol + NADP(+) = D-ribulose + NADPH + H(+). Its function is as follows. D-arabinitol dehydrogenase which mostly produces D-arabinitol in haustoria, the appendages of the parasitic fungus that penetrate the host's tissue and draws nutrients from it. D-arabinitol accumulation may serve as a carbohydrate storage compound. D-arabinitol is also capable of quenching reactive oxygen species involved in host plant defense reactions, thus providing protection for the rust fungus during the pathogenic interaction. This chain is D-arabinitol dehydrogenase 1 (ARD1), found in Uromyces fabae (Rust fungus).